The primary structure comprises 366 residues: Histidinol-phosphate aminotransferase (366 aa).

An N6-(pyridoxal phosphate)lysine modification is found at K228.

This sequence belongs to the class-II pyridoxal-phosphate-dependent aminotransferase family. Histidinol-phosphate aminotransferase subfamily. In terms of assembly, homodimer. Requires pyridoxal 5'-phosphate as cofactor.

The enzyme catalyses L-histidinol phosphate + 2-oxoglutarate = 3-(imidazol-4-yl)-2-oxopropyl phosphate + L-glutamate. It functions in the pathway amino-acid biosynthesis; L-histidine biosynthesis; L-histidine from 5-phospho-alpha-D-ribose 1-diphosphate: step 7/9. This Corynebacterium glutamicum (strain R) protein is Histidinol-phosphate aminotransferase.